Reading from the N-terminus, the 125-residue chain is MRLIYSALVTAAAMVAISNGSTPARGNEVETRSLRGGNEVDSSMSDDGERAARGGGRVRSQASGVTRHVGGGGPFIGFWYPYYNFEEKKEKKEKHHLSDEYEEYRRIAAEVKRKRQDKRLAERQD.

Positions 1 to 26 (MRLIYSALVTAAAMVAISNGSTPARG) are cleaved as a signal peptide. The interval 21-66 (STPARGNEVETRSLRGGNEVDSSMSDDGERAARGGGRVRSQASGVT) is disordered. Positions 32 to 50 (RSLRGGNEVDSSMSDDGER) match the RxLR-dEER motif.

It belongs to the RxLR effector family.

The protein resides in the secreted. It is found in the host nucleus. Functionally, effector that acts as a broad suppressor of cell death to interrupt plant immunity. Inhibits cell death induced by cell death-inducing proteins, including the PAMP elicitor INF1 from P.infestans. In Plasmopara viticola (Downy mildew of grapevine), this protein is Secreted RxLR effector protein 22.